A 97-amino-acid chain; its full sequence is Co-chaperonin GroES (97 aa).

The protein belongs to the GroES chaperonin family. As to quaternary structure, heptamer of 7 subunits arranged in a ring. Interacts with the chaperonin GroEL.

It is found in the cytoplasm. Functionally, together with the chaperonin GroEL, plays an essential role in assisting protein folding. The GroEL-GroES system forms a nano-cage that allows encapsulation of the non-native substrate proteins and provides a physical environment optimized to promote and accelerate protein folding. GroES binds to the apical surface of the GroEL ring, thereby capping the opening of the GroEL channel. The protein is Co-chaperonin GroES of Pseudomonas putida (strain W619).